The sequence spans 476 residues: Cardiolipin synthase (476 aa).

2 consecutive transmembrane segments (helical) span residues 2–22 (HLFI…IIFI) and 31–51 (WAWI…YILF). 2 consecutive PLD phosphodiesterase domains span residues 207-234 (INYR…GDEY) and 389-416 (EKGF…DIRS). Residues His212, Lys214, Asp219, His394, Lys396, and Asp401 contribute to the active site.

The protein belongs to the phospholipase D family. Cardiolipin synthase subfamily.

It localises to the cell membrane. It carries out the reaction 2 a 1,2-diacyl-sn-glycero-3-phospho-(1'-sn-glycerol) = a cardiolipin + glycerol. In terms of biological role, catalyzes the reversible phosphatidyl group transfer from one phosphatidylglycerol molecule to another to form cardiolipin (CL) (diphosphatidylglycerol) and glycerol. This is Cardiolipin synthase (cls) from Clostridium perfringens (strain 13 / Type A).